We begin with the raw amino-acid sequence, 493 residues long: Cholesteryl ester transfer protein (493 aa).

Positions 1–17 (MLAATVLTLALLGNVHA) are cleaved as a signal peptide. Residues Asn-59 and Asn-105 are each glycosylated (N-linked (GlcNAc...) asparagine). An intrachain disulfide couples Cys-160 to Cys-201. 3 N-linked (GlcNAc...) asparagine glycosylation sites follow: Asn-257, Asn-358, and Asn-413.

The protein belongs to the BPI/LBP/Plunc superfamily. BPI/LBP family. As to expression, probably primarily expressed in liver and adipose tissues. Detected in adrenal gland, mesenteric fat, spleen and aorta.

It localises to the secreted. It carries out the reaction cholesteryl (9Z-octadecenoate)(in) = cholesteryl (9Z-octadecenoate)(out). It catalyses the reaction 1,2,3-tri-(9Z-octadecenoyl)-glycerol(in) = 1,2,3-tri-(9Z-octadecenoyl)-glycerol(out). The catalysed reaction is cholesteryl (9Z,12Z)-octadecadienoate(in) = cholesteryl (9Z,12Z)-octadecadienoate(out). In terms of biological role, involved in the transfer of neutral lipids, including cholesteryl ester and triglyceride, among lipoprotein particles. Allows the net movement of cholesteryl ester from high density lipoproteins/HDL to triglyceride-rich very low density lipoproteins/VLDL, and the equimolar transport of triglyceride from VLDL to HDL. Regulates the reverse cholesterol transport, by which excess cholesterol is removed from peripheral tissues and returned to the liver for elimination. The sequence is that of Cholesteryl ester transfer protein from Macaca fascicularis (Crab-eating macaque).